We begin with the raw amino-acid sequence, 484 residues long: Dynein regulatory complex subunit 2 (484 aa).

Coiled coils occupy residues V92–I160 and K374–N403.

It belongs to the DRC2 family. Component of the nexin-dynein regulatory complex (N-DRC). Interacts with DRC1.

It is found in the cytoplasm. It localises to the cytoskeleton. Its subcellular location is the flagellum basal body. The protein resides in the cell projection. The protein localises to the cilium. It is found in the flagellum. It localises to the flagellum axoneme. Component of the nexin-dynein regulatory complex (N-DRC), a key regulator of ciliary/flagellar motility which maintains the alignment and integrity of the distal axoneme and regulates microtubule sliding in motile axonemes. Plays a critical role in the assembly of N-DRC and also stabilizes the assembly of multiple inner dynein arms and radial spokes. Coassembles with DRC1 to form a central scaffold needed for assembly of the N-DRC and its attachment to the outer doublet microtubules. The polypeptide is Dynein regulatory complex subunit 2 (CCDC65) (Macaca fascicularis (Crab-eating macaque)).